A 214-amino-acid chain; its full sequence is Transcriptional activator protein ExaE (214 aa).

One can recognise a Response regulatory domain in the interval 2 to 118; sequence GILLVDDHPM…VVLEAVRRVL (117 aa). 4-aspartylphosphate is present on aspartate 53. In terms of domain architecture, HTH luxR-type spans 143-208; sequence GNARLQGLTQ…ELVHLAIEAG (66 aa). The segment at residues 167–186 is a DNA-binding region (H-T-H motif); it reads TRLIAQQLCISAKTVSNYLT.

In terms of biological role, positive regulator of the expression of the gene qedA and the activity of ADH I but does not affect the activities of ADH IIB or ADH IIG. This Pseudomonas putida (Arthrobacter siderocapsulatus) protein is Transcriptional activator protein ExaE.